The following is an 83-amino-acid chain: Protein WFDC9 (83 aa).

An N-terminal signal peptide occupies residues 1–24 (MKPWIIVLTVSAHGILVFLHVLGS).

It localises to the secreted. In Mus musculus (Mouse), this protein is Protein WFDC9 (Wfdc9).